Consider the following 224-residue polypeptide: MHINNWPTHERPREKLLAHGAATLSDAELLAIFLGSGLRGHDAVQTARNLLHTHGPLRELLDRPPGDLMRLPGLGLARACKLTAALELSTRHLAAALQRGASIHDPISAGRYFAQRLRANPNEVFAVLFLDNRHRAISFEELFHGTINGAEVHPREVVRRALTLNAAAVIVGHNHPSGNREPSPADQMITQRLKNALDLIDVRLVDHFVIGDGAPVSFAEHGWL.

The MPN domain maps to 102 to 224 (SIHDPISAGR…PVSFAEHGWL (123 aa)). Positions 173, 175, and 186 each coordinate Zn(2+). Residues 173 to 186 (HNHPSGNREPSPAD) carry the JAMM motif motif.

The protein belongs to the UPF0758 family.

This chain is UPF0758 protein PD_0117, found in Xylella fastidiosa (strain Temecula1 / ATCC 700964).